The following is an 862-amino-acid chain: DNA topoisomerase 3-beta-1 (862 aa).

The Toprim domain occupies T3–S153. Residues D171–F593 enclose the Topo IA-type catalytic domain. Y336 functions as the O-(5'-phospho-DNA)-tyrosine intermediate in the catalytic mechanism. A disordered region spans residues H820 to S855. Positions P821–K851 are enriched in basic residues.

Belongs to the type IA topoisomerase family. In terms of tissue distribution, highly expressed in testis.

The enzyme catalyses ATP-independent breakage of single-stranded DNA, followed by passage and rejoining.. In terms of biological role, releases the supercoiling and torsional tension of DNA introduced during the DNA replication and transcription by transiently cleaving and rejoining one strand of the DNA duplex. Introduces a single-strand break via transesterification at a target site in duplex DNA. The scissile phosphodiester is attacked by the catalytic tyrosine of the enzyme, resulting in the formation of a DNA-(5'-phosphotyrosyl)-enzyme intermediate and the expulsion of a 3'-OH DNA strand. The free DNA strand than undergoes passage around the unbroken strand thus removing DNA supercoils. Finally, in the religation step, the DNA 3'-OH attacks the covalent intermediate to expel the active-site tyrosine and restore the DNA phosphodiester backbone. Possesses negatively supercoiled DNA relaxing activity. The protein is DNA topoisomerase 3-beta-1 (Top3b) of Mus musculus (Mouse).